Here is a 119-residue protein sequence, read N- to C-terminus: Ribonuclease P protein component (119 aa).

Belongs to the RnpA family. Consists of a catalytic RNA component (M1 or rnpB) and a protein subunit.

The enzyme catalyses Endonucleolytic cleavage of RNA, removing 5'-extranucleotides from tRNA precursor.. RNaseP catalyzes the removal of the 5'-leader sequence from pre-tRNA to produce the mature 5'-terminus. It can also cleave other RNA substrates such as 4.5S RNA. The protein component plays an auxiliary but essential role in vivo by binding to the 5'-leader sequence and broadening the substrate specificity of the ribozyme. The protein is Ribonuclease P protein component of Aromatoleum aromaticum (strain DSM 19018 / LMG 30748 / EbN1) (Azoarcus sp. (strain EbN1)).